The primary structure comprises 315 residues: DNA-directed RNA polymerase subunit alpha (315 aa).

Residues 1 to 228 (MIGMEKPKIE…EHLELFISLT (228 aa)) form an alpha N-terminal domain (alpha-NTD) region. Residues 245–315 (RNKLMEMTIE…FGLSLRQPDD (71 aa)) form an alpha C-terminal domain (alpha-CTD) region.

This sequence belongs to the RNA polymerase alpha chain family. In terms of assembly, homodimer. The RNAP catalytic core consists of 2 alpha, 1 beta, 1 beta' and 1 omega subunit. When a sigma factor is associated with the core the holoenzyme is formed, which can initiate transcription.

It carries out the reaction RNA(n) + a ribonucleoside 5'-triphosphate = RNA(n+1) + diphosphate. Functionally, DNA-dependent RNA polymerase catalyzes the transcription of DNA into RNA using the four ribonucleoside triphosphates as substrates. This is DNA-directed RNA polymerase subunit alpha from Symbiobacterium thermophilum (strain DSM 24528 / JCM 14929 / IAM 14863 / T).